The chain runs to 83 residues: UPF0346 protein M28_Spy0369 (83 aa).

Belongs to the UPF0346 family.

This Streptococcus pyogenes serotype M28 (strain MGAS6180) protein is UPF0346 protein M28_Spy0369.